Reading from the N-terminus, the 268-residue chain is 4-pyridoxolactonase (268 aa).

Residues histidine 96, histidine 98, aspartate 100, histidine 101, histidine 185, aspartate 207, and histidine 252 each contribute to the Zn(2+) site. Aspartate 100 functions as the Proton donor/acceptor in the catalytic mechanism.

Belongs to the metallo-beta-lactamase superfamily. Homodimer. The cofactor is Zn(2+).

The enzyme catalyses 4-pyridoxolactone + H2O = 4-pyridoxate + H(+). It functions in the pathway cofactor degradation; B6 vitamer degradation; 4-pyridoxate from pyridoxal: step 2/2. Inhibited by Hg(2+). Its function is as follows. Involved in the degradation of pyridoxine or pyridoxamine (free, phosphate-unbound, forms of vitamin B6). Hydrolyzes 4-pyridoxolactone to 4-pyridoxic acid. Has lower activity toward N-hexanoyl-D,L-homoserine lactone, but is not active toward 5-pyridoxolactone and gamma-butyrolactone. The chain is 4-pyridoxolactonase from Mesorhizobium japonicum (strain LMG 29417 / CECT 9101 / MAFF 303099) (Mesorhizobium loti (strain MAFF 303099)).